The following is a 471-amino-acid chain: Heat shock 70 kDa protein 13 (471 aa).

A signal peptide spans 1–22 (MAGEMTILGSAVLTLLLAGYLA). N-linked (GlcNAc...) asparagine glycosylation occurs at Asn-184. The tract at residues 316–339 (NDSQKPQNADSKLPEDQLTPGDGH) is disordered.

The protein belongs to the heat shock protein 70 family. As to quaternary structure, binds UBQLN2.

The protein localises to the microsome. It localises to the endoplasmic reticulum. In terms of biological role, has peptide-independent ATPase activity. The chain is Heat shock 70 kDa protein 13 (Hspa13) from Rattus norvegicus (Rat).